We begin with the raw amino-acid sequence, 552 residues long: Urocanate hydratase (552 aa).

NAD(+) contacts are provided by residues 48 to 49 (GG), Gln-126, 172 to 174 (GMG), Asp-192, 238 to 239 (NA), 259 to 263 (QTSAH), 268 to 269 (YL), and Tyr-317. Cys-405 is a catalytic residue. Gly-487 lines the NAD(+) pocket.

Belongs to the urocanase family. The cofactor is NAD(+).

The protein resides in the cytoplasm. The enzyme catalyses 4-imidazolone-5-propanoate = trans-urocanate + H2O. It participates in amino-acid degradation; L-histidine degradation into L-glutamate; N-formimidoyl-L-glutamate from L-histidine: step 2/3. Catalyzes the conversion of urocanate to 4-imidazolone-5-propionate. The protein is Urocanate hydratase of Streptomyces griseus subsp. griseus (strain JCM 4626 / CBS 651.72 / NBRC 13350 / KCC S-0626 / ISP 5235).